Here is a 251-residue protein sequence, read N- to C-terminus: MNLNSIPAFDDNYIWVLNDEAGRCLIVDPGDAEPVLNAISANNWQPEAIFLTHHHHDHVGGVKELVEKFPQIVVYGPQETQDKGTTQVVKDGETAFVLGHEFSVIATPGHTLGHICYFSKPYLFCGDTLFSGGCGRLFEGTPSQMYQSIKKLSALPDDTLVCCAHEYTLSNMKFALSILPHDLSINDYYRKVKELRAKNQITLPVILKNERQINVFLRTEDIDLINVINEETLLQQPEERFAWLRSKKDRF.

Zn(2+)-binding residues include histidine 53, histidine 55, aspartate 57, histidine 58, histidine 110, aspartate 127, and histidine 165.

Belongs to the metallo-beta-lactamase superfamily. Glyoxalase II family. In terms of assembly, monomer. Zn(2+) serves as cofactor.

The catalysed reaction is an S-(2-hydroxyacyl)glutathione + H2O = a 2-hydroxy carboxylate + glutathione + H(+). Its pathway is secondary metabolite metabolism; methylglyoxal degradation; (R)-lactate from methylglyoxal: step 2/2. In terms of biological role, thiolesterase that catalyzes the hydrolysis of S-D-lactoyl-glutathione to form glutathione and D-lactic acid. This Escherichia coli O45:K1 (strain S88 / ExPEC) protein is Hydroxyacylglutathione hydrolase.